Consider the following 103-residue polypeptide: Cyanovirin-N homolog (103 aa).

This sequence belongs to the cyanovirin-N family.

Functionally, mannose-binding lectin. This chain is Cyanovirin-N homolog, found in Tuber borchii (White truffle).